Here is a 416-residue protein sequence, read N- to C-terminus: L-cysteine:1D-myo-inositol 2-amino-2-deoxy-alpha-D-glucopyranoside ligase (416 aa).

Residue cysteine 45 participates in Zn(2+) binding. Residues 45-48 (CGIT), threonine 60, and 83-85 (NVT) contribute to the L-cysteinyl-5'-AMP site. Positions 47-57 (ITPYDSTHLGH) match the 'HIGH' region motif. Residues 191–196 (ERGGDP) carry the 'ERGGDP' region motif. Position 232 (tryptophan 232) interacts with L-cysteinyl-5'-AMP. Residue cysteine 236 participates in Zn(2+) binding. Residue 254–256 (GSD) coordinates L-cysteinyl-5'-AMP. Histidine 261 contributes to the Zn(2+) binding site. Residue valine 286 participates in L-cysteinyl-5'-AMP binding. Positions 292 to 296 (KMSKS) match the 'KMSKS' region motif.

This sequence belongs to the class-I aminoacyl-tRNA synthetase family. MshC subfamily. Monomer. It depends on Zn(2+) as a cofactor.

It catalyses the reaction 1D-myo-inositol 2-amino-2-deoxy-alpha-D-glucopyranoside + L-cysteine + ATP = 1D-myo-inositol 2-(L-cysteinylamino)-2-deoxy-alpha-D-glucopyranoside + AMP + diphosphate + H(+). Functionally, catalyzes the ATP-dependent condensation of GlcN-Ins and L-cysteine to form L-Cys-GlcN-Ins. The polypeptide is L-cysteine:1D-myo-inositol 2-amino-2-deoxy-alpha-D-glucopyranoside ligase (Brachybacterium faecium (strain ATCC 43885 / DSM 4810 / JCM 11609 / LMG 19847 / NBRC 14762 / NCIMB 9860 / 6-10)).